The sequence spans 570 residues: Putative ABC transporter ATP-binding protein SAV2684 (570 aa).

2 ABC transporter domains span residues 6–247 (ISFK…GIRE) and 304–537 (LELN…ASLR). Residues 40–47 (GASGSGKS) and 338–345 (GHNGAGKS) contribute to the ATP site.

The protein belongs to the ABC transporter superfamily.

It is found in the cell membrane. Its function is as follows. Probably part of an ABC transporter complex. Responsible for energy coupling to the transport system. The protein is Putative ABC transporter ATP-binding protein SAV2684 of Staphylococcus aureus (strain Mu50 / ATCC 700699).